The chain runs to 181 residues: RNA-binding protein (181 aa).

Residues 106–181 (FLTSVNPGES…DANTRKSKRK (76 aa)) are disordered. Positions 141-157 (RNSKKGAKKSSSARKKK) are enriched in basic residues. Positions 160-172 (SSNSETDLSSDSD) are enriched in low complexity.

It belongs to the phytoreovirus RNA-binding protein family.

The protein localises to the host cytoplasm. Functionally, constituent of viral factories. Binds to ssRNA and dsRNA. The sequence is that of RNA-binding protein from Rice dwarf virus (isolate Akita) (RDV).